We begin with the raw amino-acid sequence, 496 residues long: Probable CtpA-like serine protease (496 aa).

A disordered region spans residues 1–26 (MRKCFFMSHNPEEKQSNLDSNHKNES). Over residues 10–25 (NPEEKQSNLDSNHKNE) the composition is skewed to basic and acidic residues. A helical membrane pass occupies residues 39–59 (FILLLLGVVIITAGITVAATI). Residues 124 to 206 (TKSFNEDVSG…TTVKLTIKRG (83 aa)) enclose the PDZ domain. Active-site charge relay system residues include Ser329, Asp340, and Lys354.

The protein belongs to the peptidase S41A family.

Its subcellular location is the cell membrane. The sequence is that of Probable CtpA-like serine protease from Staphylococcus haemolyticus (strain JCSC1435).